A 124-amino-acid chain; its full sequence is Small ribosomal subunit protein uS12 (124 aa).

D89 is subject to 3-methylthioaspartic acid.

It belongs to the universal ribosomal protein uS12 family. Part of the 30S ribosomal subunit. Contacts proteins S8 and S17. May interact with IF1 in the 30S initiation complex.

In terms of biological role, with S4 and S5 plays an important role in translational accuracy. Functionally, interacts with and stabilizes bases of the 16S rRNA that are involved in tRNA selection in the A site and with the mRNA backbone. Located at the interface of the 30S and 50S subunits, it traverses the body of the 30S subunit contacting proteins on the other side and probably holding the rRNA structure together. The combined cluster of proteins S8, S12 and S17 appears to hold together the shoulder and platform of the 30S subunit. The polypeptide is Small ribosomal subunit protein uS12 (Buchnera aphidicola subsp. Acyrthosiphon pisum (strain 5A)).